The primary structure comprises 244 residues: 5-oxoprolinase subunit A (244 aa).

It belongs to the LamB/PxpA family. In terms of assembly, forms a complex composed of PxpA, PxpB and PxpC.

It catalyses the reaction 5-oxo-L-proline + ATP + 2 H2O = L-glutamate + ADP + phosphate + H(+). Functionally, catalyzes the cleavage of 5-oxoproline to form L-glutamate coupled to the hydrolysis of ATP to ADP and inorganic phosphate. The polypeptide is 5-oxoprolinase subunit A (Salmonella choleraesuis (strain SC-B67)).